The sequence spans 265 residues: 4-hydroxy-tetrahydrodipicolinate reductase (265 aa).

Residues 7 to 12 (GASGRM) and Asp-33 contribute to the NAD(+) site. Position 34 (Arg-34) interacts with NADP(+). NAD(+) is bound by residues 96 to 98 (GTT) and 120 to 123 (AANM). The Proton donor/acceptor role is filled by His-153. His-154 contacts (S)-2,3,4,5-tetrahydrodipicolinate. Catalysis depends on Lys-157, which acts as the Proton donor. 163–164 (GT) lines the (S)-2,3,4,5-tetrahydrodipicolinate pocket.

Belongs to the DapB family.

It is found in the cytoplasm. It carries out the reaction (S)-2,3,4,5-tetrahydrodipicolinate + NAD(+) + H2O = (2S,4S)-4-hydroxy-2,3,4,5-tetrahydrodipicolinate + NADH + H(+). The enzyme catalyses (S)-2,3,4,5-tetrahydrodipicolinate + NADP(+) + H2O = (2S,4S)-4-hydroxy-2,3,4,5-tetrahydrodipicolinate + NADPH + H(+). Its pathway is amino-acid biosynthesis; L-lysine biosynthesis via DAP pathway; (S)-tetrahydrodipicolinate from L-aspartate: step 4/4. Catalyzes the conversion of 4-hydroxy-tetrahydrodipicolinate (HTPA) to tetrahydrodipicolinate. The sequence is that of 4-hydroxy-tetrahydrodipicolinate reductase from Burkholderia orbicola (strain MC0-3).